The following is a 121-amino-acid chain: Large ribosomal subunit protein bL20 (121 aa).

This sequence belongs to the bacterial ribosomal protein bL20 family.

Its function is as follows. Binds directly to 23S ribosomal RNA and is necessary for the in vitro assembly process of the 50S ribosomal subunit. It is not involved in the protein synthesizing functions of that subunit. The polypeptide is Large ribosomal subunit protein bL20 (Sphingopyxis alaskensis (strain DSM 13593 / LMG 18877 / RB2256) (Sphingomonas alaskensis)).